Here is a 473-residue protein sequence, read N- to C-terminus: Microtubule-binding protein TANGLED (473 aa).

The interval 1–132 is required for binding to TAN and location to the cortical division sites (CDS) during cytokinesis; it reads MVARTPQKQR…VTRDIVDAIA (132 aa). 2 disordered regions span residues 131-218 and 290-354; these read IAPK…ENSF and ASKF…LSTA. 2 stretches are compositionally biased toward polar residues: residues 205–216 and 307–329; these read ISPQVKGNNGEN and PTRN…TRTV.

In terms of assembly, interacts with POK1. In terms of tissue distribution, strongly expressed in flower buds and root tips.

The protein localises to the nucleus. The protein resides in the nucleolus. It localises to the cytoplasm. Its subcellular location is the cytoskeleton. It is found in the phragmoplast. In terms of biological role, is required for spatial control cell division during plant development. Through an association with microtubules, acts both for the positioning of cytoskeletal arrays that establish planes of cell division during prophase and for spatial guidance of expanding phragmoplasts toward preestablished cortical division sites (CDS) during cytokinesis. In Arabidopsis thaliana (Mouse-ear cress), this protein is Microtubule-binding protein TANGLED (TAN).